The following is a 231-amino-acid chain: Small ribosomal subunit protein uS3 (231 aa).

Residues 39–107 (IRKYIVENLP…DVKLNIVEIR (69 aa)) enclose the KH type-2 domain.

Belongs to the universal ribosomal protein uS3 family. In terms of assembly, part of the 30S ribosomal subunit. Forms a tight complex with proteins S10 and S14.

Functionally, binds the lower part of the 30S subunit head. Binds mRNA in the 70S ribosome, positioning it for translation. The sequence is that of Small ribosomal subunit protein uS3 from Novosphingobium aromaticivorans (strain ATCC 700278 / DSM 12444 / CCUG 56034 / CIP 105152 / NBRC 16084 / F199).